Reading from the N-terminus, the 239-residue chain is Purine nucleoside phosphorylase DeoD-type 1 (239 aa).

Residue histidine 5 coordinates a purine D-ribonucleoside. Residues glycine 21, arginine 25, arginine 44, and 88–91 contribute to the phosphate site; that span reads RVGS. A purine D-ribonucleoside contacts are provided by residues 180-182 and 204-205; these read EME and SD. The active-site Proton donor is the aspartate 205.

It belongs to the PNP/UDP phosphorylase family. Homohexamer; trimer of homodimers.

It carries out the reaction a purine D-ribonucleoside + phosphate = a purine nucleobase + alpha-D-ribose 1-phosphate. The enzyme catalyses a purine 2'-deoxy-D-ribonucleoside + phosphate = a purine nucleobase + 2-deoxy-alpha-D-ribose 1-phosphate. Catalyzes the reversible phosphorolytic breakdown of the N-glycosidic bond in the beta-(deoxy)ribonucleoside molecules, with the formation of the corresponding free purine bases and pentose-1-phosphate. This chain is Purine nucleoside phosphorylase DeoD-type 1, found in Vibrio vulnificus (strain CMCP6).